The sequence spans 314 residues: ATP synthase gamma chain (314 aa).

The protein belongs to the ATPase gamma chain family. As to quaternary structure, F-type ATPases have 2 components, CF(1) - the catalytic core - and CF(0) - the membrane proton channel. CF(1) has five subunits: alpha(3), beta(3), gamma(1), delta(1), epsilon(1). CF(0) has three main subunits: a, b and c.

The protein resides in the cellular thylakoid membrane. Functionally, produces ATP from ADP in the presence of a proton gradient across the membrane. The gamma chain is believed to be important in regulating ATPase activity and the flow of protons through the CF(0) complex. In Synechocystis sp. (strain ATCC 27184 / PCC 6803 / Kazusa), this protein is ATP synthase gamma chain.